The sequence spans 494 residues: Lysine--tRNA ligase (494 aa).

Positions 405 and 412 each coordinate Mg(2+).

This sequence belongs to the class-II aminoacyl-tRNA synthetase family. As to quaternary structure, homodimer. Mg(2+) is required as a cofactor.

The protein localises to the cytoplasm. It carries out the reaction tRNA(Lys) + L-lysine + ATP = L-lysyl-tRNA(Lys) + AMP + diphosphate. This chain is Lysine--tRNA ligase (lysS), found in Geobacillus stearothermophilus (Bacillus stearothermophilus).